The sequence spans 211 residues: Allatostatins MIP (211 aa).

An N-terminal signal peptide occupies residues 1 to 24 (MAHTKTRRTYGFLMVLLILGSACG). The propeptide occupies 25 to 63 (NLVASGSAGSPPSNEPGGGGLSEQVVLDQLSESDLYGNN). Trp-74 is modified (tryptophan amide). Residues 78–148 (SSSGDVSDPD…DDLAGEPDVE (71 aa)) constitute a propeptide that is removed on maturation. Low complexity predominate over residues 115–135 (ASGQSAQQQQQQPLQQQSQSG). Residues 115 to 142 (ASGQSAQQQQQQPLQQQSQSGEDFDDLA) form a disordered region. A tryptophan amide mark is found at Trp-159, Trp-175, Trp-189, and Trp-202. Positions 168–190 (WNKFRGAWGKREPTWNNLKGMWG) are disordered. The propeptide occupies 206–211 (SQLPSN).

In larvae, strongly expressed in the midgut region before and in between the copper cells, and in a group of cells in the posterior part of the larval midgut. Expressed in the neurons of many areas including the subesophageal ganglion/tritocerebrum (SOG), olfactory glomeruli, lateral ventral protocerebrum, mushroom body, the optic lobe medulla and in the antennal lobes.

Its subcellular location is the secreted. Its function is as follows. Ligand for the sex peptide receptor (SPR). Stabilizes sleep and maintains sleep homeostasis to inhibit the activity of wake-promoting circuits, such as those that involve the pigment dispersing factor (pdf) neurons. Regulated by the circadian clock network and pathways associated with a sleep homeostat. May also have a regulatory role in gut motility. In Drosophila melanogaster (Fruit fly), this protein is Allatostatins MIP (Mip).